We begin with the raw amino-acid sequence, 457 residues long: Methylenetetrahydrofolate--tRNA-(uracil-5-)-methyltransferase TrmFO (457 aa).

Residue 8–13 (GGGLAG) participates in FAD binding.

Belongs to the MnmG family. TrmFO subfamily. Requires FAD as cofactor.

The protein localises to the cytoplasm. It carries out the reaction uridine(54) in tRNA + (6R)-5,10-methylene-5,6,7,8-tetrahydrofolate + NADH + H(+) = 5-methyluridine(54) in tRNA + (6S)-5,6,7,8-tetrahydrofolate + NAD(+). It catalyses the reaction uridine(54) in tRNA + (6R)-5,10-methylene-5,6,7,8-tetrahydrofolate + NADPH + H(+) = 5-methyluridine(54) in tRNA + (6S)-5,6,7,8-tetrahydrofolate + NADP(+). Its function is as follows. Catalyzes the folate-dependent formation of 5-methyl-uridine at position 54 (M-5-U54) in all tRNAs. This chain is Methylenetetrahydrofolate--tRNA-(uracil-5-)-methyltransferase TrmFO, found in Thermosynechococcus vestitus (strain NIES-2133 / IAM M-273 / BP-1).